Reading from the N-terminus, the 156-residue chain is Aspartate carbamoyltransferase regulatory chain (156 aa).

Zn(2+)-binding residues include Cys107, Cys112, Cys137, and Cys140.

The protein belongs to the PyrI family. In terms of assembly, contains catalytic and regulatory chains. Zn(2+) serves as cofactor.

Involved in allosteric regulation of aspartate carbamoyltransferase. The chain is Aspartate carbamoyltransferase regulatory chain from Methanopyrus kandleri (strain AV19 / DSM 6324 / JCM 9639 / NBRC 100938).